The sequence spans 258 residues: Regulatory protein RecX (258 aa).

Belongs to the RecX family.

The protein localises to the cytoplasm. Functionally, modulates RecA activity. The polypeptide is Regulatory protein RecX (Streptococcus pneumoniae serotype 19F (strain G54)).